We begin with the raw amino-acid sequence, 479 residues long: Odorant receptor coreceptor (479 aa).

The Cytoplasmic portion of the chain corresponds to 1–43 (MMKMKQQGLVADLLPNIRVMKFFGHFVFNYYDDNSSKYLHKIF). A helical transmembrane segment spans residues 44–64 (CCVNLFLLLLQFALCAVNLII). The Extracellular segment spans residues 65–73 (ESADVDDLT). The helical transmembrane segment at 74–94 (ANTITLLFFTHSIVKIIYFAV) threads the bilayer. Residues 95 to 133 (RSKYFYRTWAIWNNPNSHPLFAESNARYHAIALKKMRLL) lie on the Cytoplasmic side of the membrane. The chain crosses the membrane as a helical span at residues 134–154 (LFLVGATTVLSAIAWTVLTFF). The Extracellular portion of the chain corresponds to 155-190 (EHPIRKLVDPVTNETTIIELPQLLLRSYYPFDASKG). Asparagine 167 is a glycosylation site (N-linked (GlcNAc...) asparagine). The helical transmembrane segment at 191–211 (IMHVIVLIYQFYWVLFMLIDA) threads the bilayer. Over 212–350 (NSLDVLFCSW…IVRLVTAVGD (139 aa)) the chain is Cytoplasmic. Residues 261–280 (SAEHLRESENQPPPPVPPQG) form a disordered region. The chain crosses the membrane as a helical span at residues 351–371 (AYGFALLLHMLTTTITLTLLA). Residues 372–383 (YQATKVNGVNVY) lie on the Extracellular side of the membrane. A helical membrane pass occupies residues 384–404 (AASTIGYIIYTFGQVFLFCIF). Topologically, residues 405-455 (GNRLIEESTSVMEAAYSCHWYDGSEEAKTFVQIVCQQCQKAMSISGAKFFT) are cytoplasmic. The helical transmembrane segment at 456-476 (VSLDLFASVLGAVVTYFMVLV) threads the bilayer. Residues 477–479 (QLK) are Extracellular-facing.

It belongs to the insect chemoreceptor superfamily. Heteromeric odorant receptor channel (TC 1.A.69) family. Orco subfamily. In terms of assembly, heterodimer with conventional odorant receptors (ORs).

Its subcellular location is the cell membrane. Its function is as follows. Odorant coreceptor which complexes with conventional odorant receptors (ORs) to form odorant-sensing units, providing sensitive and prolonged odorant signaling and calcium permeability. Obligate coreceptor of all odorant receptors. Orco is a universal and integral part of the functional odorant receptor, involved in the dendritic localization of other olfactory receptors. Can form functional ion channels in the absence of an odor-binding odorant receptor. Plays a central role in the perception of olfactory stimuli in ants and is essential for ant social organization. Required for pheromone sensing and mating behavior. Also required for the development and maintenance of odorant receptor neurons (ORNs) and of antennal lobe glomeruli. The chain is Odorant receptor coreceptor from Harpegnathos saltator (Jerdon's jumping ant).